Consider the following 201-residue polypeptide: Potassium-transporting ATPase KdpC subunit (201 aa).

The chain crosses the membrane as a helical span at residues 13–33 (IIFIIFTILCGGIYTIFITGI).

The protein belongs to the KdpC family. In terms of assembly, the system is composed of three essential subunits: KdpA, KdpB and KdpC.

The protein resides in the cell membrane. Part of the high-affinity ATP-driven potassium transport (or Kdp) system, which catalyzes the hydrolysis of ATP coupled with the electrogenic transport of potassium into the cytoplasm. This subunit acts as a catalytic chaperone that increases the ATP-binding affinity of the ATP-hydrolyzing subunit KdpB by the formation of a transient KdpB/KdpC/ATP ternary complex. The polypeptide is Potassium-transporting ATPase KdpC subunit (Clostridium botulinum (strain Alaska E43 / Type E3)).